Here is a 323-residue protein sequence, read N- to C-terminus: MEDGPVFYGFKNIFITMFATFFFFKLLIKVFLALLTHFYIVKGNRKEAARIAEEIYGGISDCWADRSPLHEAAAQGRLLALKTLIAQGVNVNLVTINRVSSLHEACLGGHVACAKALLENGAHVNGVTVHGATPLFNACCSGSAACVNVLLEFGAKAQFEVHLASPIHEAVKRGHRECMEILLANNVNIDHEVPQLGTPLYVACTYQRVDCVKKLLELGASVDHGQWLDTPLHAAARQSNVEVIHLLTDYGANLKRRNAQGKSALDLAAPKSSVEQALLLCEGPPALSQLCRLCVRKCLGRACHQAIHKLHLPEPLERFLLYQ.

ANK repeat units follow at residues A64 to L93, N97 to G126, H130 to F159, H162 to H191, Q195 to H224, and W227 to R256. Residues V274–Q323 enclose the SOCS box domain.

Belongs to the ankyrin SOCS box (ASB) family. In terms of assembly, substrate-recognition component of the ECS(ASB11) complex, composed of ASB11, CUL5, ELOB, ELOC and RNF7/RBX2.

The protein resides in the endoplasmic reticulum. It participates in protein modification; protein ubiquitination. In terms of biological role, substrate-recognition component of a cullin-5-RING E3 ubiquitin-protein ligase complex (ECS complex, also named CRL5 complex), which mediates the ubiquitination and subsequent proteasomal degradation of target proteins, such as BIK, DIRAS2 and RPN1. The ECS(ASB11) complex acts as a regulator of the endoplasmic reticulum unfolded protein response by mediating ubiquitination and degradation of BIK. This chain is Ankyrin repeat and SOCS box protein 11 (ASB11), found in Pongo abelii (Sumatran orangutan).